Consider the following 579-residue polypeptide: Type II restriction enzyme FokI (579 aa).

Residues D450, D467, and K469 contribute to the active site.

As to quaternary structure, monomer, in which form it can cleave DNA. Homodimer when bound to DNA. The cofactor is Mg(2+).

It carries out the reaction Endonucleolytic cleavage of DNA to give specific double-stranded fragments with terminal 5'-phosphates.. Its function is as follows. An S subtype restriction enzyme that recognizes the asymmetric double-stranded sequence 5'-GGATG-3' and cleaves respectively 14 bases after G-1 (top strand) and 13 bases before C-1 (bottom strand). The protein is Type II restriction enzyme FokI of Planomicrobium okeanokoites (Planococcus okeanokoites).